We begin with the raw amino-acid sequence, 652 residues long: uncharacterized protein (652 aa).

Over residues 1-13 (MSVTESKAKTERK) the composition is skewed to basic and acidic residues. Positions 1–21 (MSVTESKAKTERKSSRKPAKT) are disordered.

The protein belongs to the ParB family.

This is an uncharacterized protein from Escherichia coli (strain K12).